The following is a 297-amino-acid chain: Aspartate carbamoyltransferase catalytic subunit (297 aa).

2 residues coordinate carbamoyl phosphate: Arg-51 and Thr-52. Position 79 (Lys-79) interacts with L-aspartate. The carbamoyl phosphate site is built by Arg-101, His-130, and Gln-133. Residues Arg-163 and Arg-215 each coordinate L-aspartate. The carbamoyl phosphate site is built by Gly-256 and Pro-257.

It belongs to the aspartate/ornithine carbamoyltransferase superfamily. ATCase family. In terms of assembly, heterododecamer (2C3:3R2) of six catalytic PyrB chains organized as two trimers (C3), and six regulatory PyrI chains organized as three dimers (R2).

The catalysed reaction is carbamoyl phosphate + L-aspartate = N-carbamoyl-L-aspartate + phosphate + H(+). It functions in the pathway pyrimidine metabolism; UMP biosynthesis via de novo pathway; (S)-dihydroorotate from bicarbonate: step 2/3. In terms of biological role, catalyzes the condensation of carbamoyl phosphate and aspartate to form carbamoyl aspartate and inorganic phosphate, the committed step in the de novo pyrimidine nucleotide biosynthesis pathway. The chain is Aspartate carbamoyltransferase catalytic subunit from Ehrlichia ruminantium (strain Gardel).